The following is a 382-amino-acid chain: MRLHEHQAKQIFAKHGIRVPRGEVATSPEEAEKIAEKLGGRVVVKAQILVGGRGKAGGVKKANSPEEAKEVAKKILGMTIKGHRVEKVLVEEQLNMRKEYYVGYVVDKSSRLPTVIFSRMGGMDVEEIAAKHPDAIHRIYFDPLWGLKDYEVRKALFRAGFEGEEFKQMFDIIKKLVDIAFAYEAELTEINPLAVTDEGFLAADARLNTDDNALYRHPELAELREATEEDPLEREARLKGINYVHLGGNVGVIANGAGLAMATMDIINLMGGKPANFLDTGGGLADPVKMKNCLLHVLKDPNVRVVFINIYAEITRCEKVAEGIILALDEAPRKVPLVVKLAGTNEEIGREMLERYSSEKGAEIHFVESIEEGARKAVELAG.

The ATP-grasp domain occupies 9–235; it reads KQIFAKHGIR…ATEEDPLERE (227 aa). ATP is bound by residues Lys45, 52 to 54, Glu91, Leu94, and Glu99; that span reads GRG. 2 residues coordinate Mg(2+): Asn191 and Asp204. Asn255 provides a ligand contact to substrate.

It belongs to the succinate/malate CoA ligase beta subunit family. In terms of assembly, heterotetramer of two alpha and two beta subunits. Requires Mg(2+) as cofactor.

The enzyme catalyses succinate + ATP + CoA = succinyl-CoA + ADP + phosphate. The catalysed reaction is GTP + succinate + CoA = succinyl-CoA + GDP + phosphate. It participates in carbohydrate metabolism; tricarboxylic acid cycle; succinate from succinyl-CoA (ligase route): step 1/1. In terms of biological role, succinyl-CoA synthetase functions in the citric acid cycle (TCA), coupling the hydrolysis of succinyl-CoA to the synthesis of either ATP or GTP and thus represents the only step of substrate-level phosphorylation in the TCA. The beta subunit provides nucleotide specificity of the enzyme and binds the substrate succinate, while the binding sites for coenzyme A and phosphate are found in the alpha subunit. The sequence is that of Succinate--CoA ligase [ADP-forming] subunit beta 1 from Archaeoglobus fulgidus (strain ATCC 49558 / DSM 4304 / JCM 9628 / NBRC 100126 / VC-16).